Here is a 681-residue protein sequence, read N- to C-terminus: Endopolyphosphatase (681 aa).

The Cytoplasmic segment spans residues 1–23 (MKELQLPEKRKSNTGLSWFPSPR). Residues 24 to 44 (ILQVFLVLLGAIVAFLSFSAT) form a helical; Signal-anchor for type II membrane protein membrane-spanning segment. Residues 45–681 (SSIISSSPKH…RAFCSSGYED (637 aa)) lie on the Vacuolar side of the membrane. Residues asparagine 127, asparagine 173, asparagine 309, and asparagine 487 are each glycosylated (N-linked (GlcNAc...) asparagine). Residues 549–562 (KKKKKGKKGKKNKN) are compositionally biased toward basic residues. The tract at residues 549–585 (KKKKKGKKGKKNKNSKNWWKTDKTFPKKKPKNLPPGP) is disordered.

It belongs to the endopolyphosphatase PPN1 family. It depends on a divalent metal cation as a cofactor. In terms of processing, processing by proteases in the vacuole may be required for activation.

The protein resides in the vacuole membrane. It catalyses the reaction [phosphate](n+1) + n H2O = (n+1) phosphate + n H(+). Its function is as follows. Catalyzes the hydrolysis of inorganic polyphosphate (polyP) chains of many hundreds of phosphate residues into shorter lengths. This is Endopolyphosphatase (PPN1) from Kluyveromyces lactis (strain ATCC 8585 / CBS 2359 / DSM 70799 / NBRC 1267 / NRRL Y-1140 / WM37) (Yeast).